The primary structure comprises 336 residues: Casein kinase I isoform beta (336 aa).

The 269-residue stretch at 17-285 (YKLVREIGFG…YLRQLFRLLF (269 aa)) folds into the Protein kinase domain. Residues 23-31 (IGFGSFGHV) and lysine 46 each bind ATP. Aspartate 136 (proton acceptor) is an active-site residue. Low complexity predominate over residues 309–320 (ASSSSGEGQQAQ). The segment at 309-336 (ASSSSGEGQQAQTPTGKSDNTKSEMKHS) is disordered. The segment covering 327–336 (DNTKSEMKHS) has biased composition (basic and acidic residues).

Belongs to the protein kinase superfamily. CK1 Ser/Thr protein kinase family. Casein kinase I subfamily. Monomer.

The protein resides in the cytoplasm. It carries out the reaction L-seryl-[protein] + ATP = O-phospho-L-seryl-[protein] + ADP + H(+). It catalyses the reaction L-threonyl-[protein] + ATP = O-phospho-L-threonyl-[protein] + ADP + H(+). Its function is as follows. Casein kinases are operationally defined by their preferential utilization of acidic proteins such as caseins as substrates. It can phosphorylate a large number of proteins. Participates in Wnt signaling. The protein is Casein kinase I isoform beta (CSNK1B) of Bos taurus (Bovine).